Reading from the N-terminus, the 114-residue chain is uncharacterized protein (114 aa).

It to E.coli YfiI and P.aeruginosa RluD.

This is an uncharacterized protein from Escherichia coli O6:H1 (strain CFT073 / ATCC 700928 / UPEC).